The primary structure comprises 137 residues: 6,7-dimethyl-8-ribityllumazine synthase (137 aa).

Residues Phe11, 43-45 (SFD), and 67-69 (CVI) contribute to the 5-amino-6-(D-ribitylamino)uracil site. 72–73 (DT) provides a ligand contact to (2S)-2-hydroxy-3-oxobutyl phosphate. His75 functions as the Proton donor in the catalytic mechanism. Leu100 is a binding site for 5-amino-6-(D-ribitylamino)uracil. Arg115 lines the (2S)-2-hydroxy-3-oxobutyl phosphate pocket.

This sequence belongs to the DMRL synthase family. Forms an icosahedral capsid composed of 60 subunits, arranged as a dodecamer of pentamers.

The enzyme catalyses (2S)-2-hydroxy-3-oxobutyl phosphate + 5-amino-6-(D-ribitylamino)uracil = 6,7-dimethyl-8-(1-D-ribityl)lumazine + phosphate + 2 H2O + H(+). The protein operates within cofactor biosynthesis; riboflavin biosynthesis; riboflavin from 2-hydroxy-3-oxobutyl phosphate and 5-amino-6-(D-ribitylamino)uracil: step 1/2. Its function is as follows. Catalyzes the formation of 6,7-dimethyl-8-ribityllumazine by condensation of 5-amino-6-(D-ribitylamino)uracil with 3,4-dihydroxy-2-butanone 4-phosphate. This is the penultimate step in the biosynthesis of riboflavin. This is 6,7-dimethyl-8-ribityllumazine synthase from Methanococcus maripaludis (strain DSM 14266 / JCM 13030 / NBRC 101832 / S2 / LL).